The chain runs to 189 residues: Group XIIA secretory phospholipase A2 (189 aa).

The signal sequence occupies residues 1-22 (MALLSRPALTLLLLLMAAVVRC). The Ca(2+) site is built by glycine 88, proline 90, and phenylalanine 92. The active site involves histidine 110. Aspartate 111 is a binding site for Ca(2+). Residue aspartate 125 is part of the active site.

Requires Ca(2+) as cofactor. As to expression, abundantly expressed in heart, skeletal muscle, kidney, liver and pancreas.

The protein localises to the secreted. The protein resides in the cytoplasm. The catalysed reaction is a 1,2-diacyl-sn-glycero-3-phosphocholine + H2O = a 1-acyl-sn-glycero-3-phosphocholine + a fatty acid + H(+). PA2 catalyzes the calcium-dependent hydrolysis of the 2-acyl groups in 3-sn-phosphoglycerides. Does not exhibit detectable activity toward sn-2-arachidonoyl- or linoleoyl-phosphatidylcholine or -phosphatidylethanolamine. This is Group XIIA secretory phospholipase A2 (PLA2G12A) from Homo sapiens (Human).